We begin with the raw amino-acid sequence, 1259 residues long: uncharacterized protein (1259 aa).

Positions 354 to 410 are disordered; the sequence is KLNQAGGKRNSSMNNSTQNNNSSRSNNSARNNNSVWNNNNSAWKNNNSAWNDNSSWK. The span at 362–410 shows a compositional bias: low complexity; it reads RNSSMNNSTQNNNSSRSNNSARNNNSVWNNNNSAWKNNNSAWNDNSSWK.

The protein resides in the virion. This is an uncharacterized protein from Acanthamoeba polyphaga (Amoeba).